Consider the following 90-residue polypeptide: Sec-independent protein translocase protein TatA (90 aa).

The chain crosses the membrane as a helical span at residues 1-21 (MGISPWTLLIVLLIVLLVFGT). Composition is skewed to basic and acidic residues over residues 42–59 (MKEG…EPSK) and 70–90 (SGEG…RHSS). The segment at 42 to 90 (MKEGEEGAKEGEKSEPSKLEQPPEEEKESGEGHTIEGERSEQPRDRHSS) is disordered.

Belongs to the TatA/E family. As to quaternary structure, the Tat system comprises two distinct complexes: a TatABC complex, containing multiple copies of TatA, TatB and TatC subunits, and a separate TatA complex, containing only TatA subunits. Substrates initially bind to the TatABC complex, which probably triggers association of the separate TatA complex to form the active translocon.

The protein localises to the cell inner membrane. Part of the twin-arginine translocation (Tat) system that transports large folded proteins containing a characteristic twin-arginine motif in their signal peptide across membranes. TatA could form the protein-conducting channel of the Tat system. This is Sec-independent protein translocase protein TatA from Alkalilimnicola ehrlichii (strain ATCC BAA-1101 / DSM 17681 / MLHE-1).